The primary structure comprises 65 residues: Putative beta-neurotoxin RjAa12 (65 aa).

Residues 1-64 (KEGYPVGRDG…VWDSSTNKCG (64 aa)) enclose the LCN-type CS-alpha/beta domain. 4 disulfides stabilise this stretch: C11–C63, C15–C37, C22–C44, and C26–C46.

It belongs to the long (4 C-C) scorpion toxin superfamily. Sodium channel inhibitor family. Beta subfamily. Expressed by the venom gland.

Its subcellular location is the secreted. Functionally, beta toxins bind voltage-independently at site-4 of sodium channels (Nav) and shift the voltage of activation toward more negative potentials thereby affecting sodium channel activation and promoting spontaneous and repetitive firing. This chain is Putative beta-neurotoxin RjAa12, found in Rhopalurus junceus (Caribbean blue scorpion).